The chain runs to 154 residues: D-aminoacyl-tRNA deacylase (154 aa).

The short motif at 142–143 (GP) is the Gly-cisPro motif, important for rejection of L-amino acids element.

It belongs to the DTD family. As to quaternary structure, homodimer.

It localises to the cytoplasm. It carries out the reaction glycyl-tRNA(Ala) + H2O = tRNA(Ala) + glycine + H(+). The catalysed reaction is a D-aminoacyl-tRNA + H2O = a tRNA + a D-alpha-amino acid + H(+). Its function is as follows. An aminoacyl-tRNA editing enzyme that deacylates mischarged D-aminoacyl-tRNAs. Also deacylates mischarged glycyl-tRNA(Ala), protecting cells against glycine mischarging by AlaRS. Acts via tRNA-based rather than protein-based catalysis; rejects L-amino acids rather than detecting D-amino acids in the active site. By recycling D-aminoacyl-tRNA to D-amino acids and free tRNA molecules, this enzyme counteracts the toxicity associated with the formation of D-aminoacyl-tRNA entities in vivo and helps enforce protein L-homochirality. This chain is D-aminoacyl-tRNA deacylase, found in Polaromonas naphthalenivorans (strain CJ2).